Reading from the N-terminus, the 311-residue chain is N-acetylmuramic acid 6-phosphate etherase (311 aa).

The SIS domain occupies 64–227 (IYQRLIDNGR…SSGVMIKLGK (164 aa)). E92 acts as the Proton donor in catalysis. Residue E123 is part of the active site.

Belongs to the GCKR-like family. MurNAc-6-P etherase subfamily. Homodimer.

It carries out the reaction N-acetyl-D-muramate 6-phosphate + H2O = N-acetyl-D-glucosamine 6-phosphate + (R)-lactate. Its pathway is amino-sugar metabolism; N-acetylmuramate degradation. In terms of biological role, specifically catalyzes the cleavage of the D-lactyl ether substituent of MurNAc 6-phosphate, producing GlcNAc 6-phosphate and D-lactate. The sequence is that of N-acetylmuramic acid 6-phosphate etherase from Prochlorococcus marinus (strain SARG / CCMP1375 / SS120).